Reading from the N-terminus, the 554-residue chain is Urocanate hydratase (554 aa).

Residues 49–50 (GG), Gln-127, 173–175 (GMG), Glu-193, Arg-198, 239–240 (NA), 260–264 (QTSAH), 270–271 (YI), and Tyr-319 each bind NAD(+). Cys-407 is an active-site residue. Position 489 (Gly-489) interacts with NAD(+).

It belongs to the urocanase family. Requires NAD(+) as cofactor.

The protein localises to the cytoplasm. It carries out the reaction 4-imidazolone-5-propanoate = trans-urocanate + H2O. It functions in the pathway amino-acid degradation; L-histidine degradation into L-glutamate; N-formimidoyl-L-glutamate from L-histidine: step 2/3. Catalyzes the conversion of urocanate to 4-imidazolone-5-propionate. In Bacillus velezensis (strain DSM 23117 / BGSC 10A6 / LMG 26770 / FZB42) (Bacillus amyloliquefaciens subsp. plantarum), this protein is Urocanate hydratase.